The following is a 630-amino-acid chain: Probable potassium transport system protein Kup (630 aa).

12 helical membrane passes run L17–L37, P51–I71, I105–V125, P144–I164, L175–I195, V218–L238, Y255–L275, P283–A303, I344–F364, Y374–V394, L402–N422, and Q428–Y448.

The protein belongs to the HAK/KUP transporter (TC 2.A.72) family.

Its subcellular location is the cell inner membrane. It carries out the reaction K(+)(in) + H(+)(in) = K(+)(out) + H(+)(out). Its function is as follows. Transport of potassium into the cell. Likely operates as a K(+):H(+) symporter. In Burkholderia pseudomallei (strain 1710b), this protein is Probable potassium transport system protein Kup.